Consider the following 283-residue polypeptide: Thymidylate synthase (283 aa).

Arg22 contributes to the dUMP binding site. The Nucleophile role is filled by Cys160. DUMP is bound by residues 180-183, Asn191, and 221-223; these read RSCD and HIY. Asp183 contacts (6R)-5,10-methylene-5,6,7,8-tetrahydrofolate. Ser282 serves as a coordination point for (6R)-5,10-methylene-5,6,7,8-tetrahydrofolate.

It belongs to the thymidylate synthase family. Bacterial-type ThyA subfamily. As to quaternary structure, homodimer.

The protein resides in the cytoplasm. The enzyme catalyses dUMP + (6R)-5,10-methylene-5,6,7,8-tetrahydrofolate = 7,8-dihydrofolate + dTMP. It participates in pyrimidine metabolism; dTTP biosynthesis. In terms of biological role, catalyzes the reductive methylation of 2'-deoxyuridine-5'-monophosphate (dUMP) to 2'-deoxythymidine-5'-monophosphate (dTMP) while utilizing 5,10-methylenetetrahydrofolate (mTHF) as the methyl donor and reductant in the reaction, yielding dihydrofolate (DHF) as a by-product. This enzymatic reaction provides an intracellular de novo source of dTMP, an essential precursor for DNA biosynthesis. This chain is Thymidylate synthase, found in Shewanella piezotolerans (strain WP3 / JCM 13877).